The primary structure comprises 388 residues: Splicing factor 3B subunit 4 (388 aa).

2 RRM domains span residues 13 to 91 and 100 to 179; these read ATIY…KASA and ANIF…YAFK. The segment at 244 to 388 is disordered; that stretch reads QPPPLMGMAQ…GMIPPPPPPS (145 aa). Pro residues-rich tracts occupy residues 261–325, 333–355, and 362–388; these read PPVP…PSRF, MPPP…PPRY, and MYPP…PPPS.

Belongs to the SF3B4 family.

The protein resides in the nucleus. In terms of biological role, subunit of the splicing factor SF3B required for 'A' complex assembly formed by the stable binding of U2 snRNP to the branchpoint sequence (BPS) in pre-mRNA. Sequence independent binding of SF3A/SF3B complex upstream of the branch site is essential, it may anchor U2 snRNP to the pre-mRNA. May also be involved in the assembly of the 'E' complex. SF3B4 has been found in complex 'B' and 'C' as well. Belongs also to the minor U12-dependent spliceosome, which is involved in the splicing of rare class of nuclear pre-mRNA intron. The protein is Splicing factor 3B subunit 4 (sap-49) of Caenorhabditis elegans.